Consider the following 364-residue polypeptide: Probable dual-specificity RNA methyltransferase RlmN (364 aa).

Residue E107 is the Proton acceptor of the active site. The 234-residue stretch at 113-346 folds into the Radical SAM core domain; sequence HNYGNSVCVT…VTIRREHGHD (234 aa). An intrachain disulfide couples C120 to C351. [4Fe-4S] cluster-binding residues include C127, C131, and C134. Residues 177–178, S209, 232–234, and N308 contribute to the S-adenosyl-L-methionine site; these read GE and SLH. The active-site S-methylcysteine intermediate is the C351.

Belongs to the radical SAM superfamily. RlmN family. It depends on [4Fe-4S] cluster as a cofactor.

Its subcellular location is the cytoplasm. The catalysed reaction is adenosine(2503) in 23S rRNA + 2 reduced [2Fe-2S]-[ferredoxin] + 2 S-adenosyl-L-methionine = 2-methyladenosine(2503) in 23S rRNA + 5'-deoxyadenosine + L-methionine + 2 oxidized [2Fe-2S]-[ferredoxin] + S-adenosyl-L-homocysteine. It carries out the reaction adenosine(37) in tRNA + 2 reduced [2Fe-2S]-[ferredoxin] + 2 S-adenosyl-L-methionine = 2-methyladenosine(37) in tRNA + 5'-deoxyadenosine + L-methionine + 2 oxidized [2Fe-2S]-[ferredoxin] + S-adenosyl-L-homocysteine. Functionally, specifically methylates position 2 of adenine 2503 in 23S rRNA and position 2 of adenine 37 in tRNAs. This chain is Probable dual-specificity RNA methyltransferase RlmN, found in Geobacillus thermodenitrificans (strain NG80-2).